The primary structure comprises 206 residues: Oligoribonuclease (206 aa).

Residues 20-183 enclose the Exonuclease domain; the sequence is LVWLDMEMTG…ADIHESIDEL (164 aa). The active site involves tyrosine 141.

Belongs to the oligoribonuclease family.

It is found in the cytoplasm. 3'-to-5' exoribonuclease specific for small oligoribonucleotides. The chain is Oligoribonuclease from Burkholderia lata (strain ATCC 17760 / DSM 23089 / LMG 22485 / NCIMB 9086 / R18194 / 383).